Reading from the N-terminus, the 829-residue chain is Telomere length regulation protein TEL2 homolog (829 aa).

Disordered stretches follow at residues 446–493 and 620–641; these read SADF…DDLV and SEKP…PHSI. The segment covering 456–466 has biased composition (low complexity); sequence SSPSKSPLSSP. Residues 467–480 show a composition bias toward basic and acidic residues; that stretch reads EVREKSKVKVKADQ. The span at 482–493 shows a compositional bias: acidic residues; sequence SDSDLDSDDDLV. The segment covering 629 to 641 has biased composition (polar residues); sequence AESGSVNTDPHSI.

This sequence belongs to the TEL2 family.

It is found in the cytoplasm. The protein resides in the membrane. It localises to the nucleus. The protein localises to the chromosome. Its subcellular location is the telomere. Its function is as follows. Regulator of the DNA damage response (DDR). Part of the TTT complex that is required to stabilize protein levels of the phosphatidylinositol 3-kinase-related protein kinase (PIKK) family proteins. Promotes assembly, stabilizes and maintains the activity of TORC complexes, which regulate cell growth and survival in response to nutrient and hormonal signals. May be involved in telomere length regulation. This chain is Telomere length regulation protein TEL2 homolog (telo2), found in Xenopus tropicalis (Western clawed frog).